A 157-amino-acid polypeptide reads, in one-letter code: Transcription elongation factor GreA (157 aa).

Belongs to the GreA/GreB family.

Functionally, necessary for efficient RNA polymerase transcription elongation past template-encoded arresting sites. The arresting sites in DNA have the property of trapping a certain fraction of elongating RNA polymerases that pass through, resulting in locked ternary complexes. Cleavage of the nascent transcript by cleavage factors such as GreA or GreB allows the resumption of elongation from the new 3'terminus. GreA releases sequences of 2 to 3 nucleotides. The protein is Transcription elongation factor GreA of Chelativorans sp. (strain BNC1).